A 454-amino-acid polypeptide reads, in one-letter code: Serine--tRNA ligase (454 aa).

247-249 (TAE) provides a ligand contact to L-serine. ATP is bound by residues 278–280 (RKE) and Val-294. Glu-301 provides a ligand contact to L-serine. 365–368 (ELAS) contacts ATP. Thr-400 contributes to the L-serine binding site.

This sequence belongs to the class-II aminoacyl-tRNA synthetase family. Type-1 seryl-tRNA synthetase subfamily. Homodimer. The tRNA molecule binds across the dimer.

The protein resides in the cytoplasm. The catalysed reaction is tRNA(Ser) + L-serine + ATP = L-seryl-tRNA(Ser) + AMP + diphosphate + H(+). It catalyses the reaction tRNA(Sec) + L-serine + ATP = L-seryl-tRNA(Sec) + AMP + diphosphate + H(+). It participates in aminoacyl-tRNA biosynthesis; selenocysteinyl-tRNA(Sec) biosynthesis; L-seryl-tRNA(Sec) from L-serine and tRNA(Sec): step 1/1. Its function is as follows. Catalyzes the attachment of serine to tRNA(Ser). Is also able to aminoacylate tRNA(Sec) with serine, to form the misacylated tRNA L-seryl-tRNA(Sec), which will be further converted into selenocysteinyl-tRNA(Sec). This Pyrobaculum calidifontis (strain DSM 21063 / JCM 11548 / VA1) protein is Serine--tRNA ligase.